Consider the following 545-residue polypeptide: Membrane protein insertase YidC (545 aa).

4 helical membrane-spanning segments follow: residues 350-370 (IIGNWGWAIVVLTIIVKAVLY), 424-444 (LPMLLQIPVFIGLYWALFASV), 461-481 (ADPYYILPIIMAATMFAQTYL), and 498-518 (PLVFSVMFFFFPAGLVLYWVV).

Belongs to the OXA1/ALB3/YidC family. Type 1 subfamily. As to quaternary structure, interacts with the Sec translocase complex via SecD. Specifically interacts with transmembrane segments of nascent integral membrane proteins during membrane integration.

It is found in the cell inner membrane. Functionally, required for the insertion and/or proper folding and/or complex formation of integral membrane proteins into the membrane. Involved in integration of membrane proteins that insert both dependently and independently of the Sec translocase complex, as well as at least some lipoproteins. Aids folding of multispanning membrane proteins. The protein is Membrane protein insertase YidC of Neisseria gonorrhoeae (strain ATCC 700825 / FA 1090).